The following is a 940-amino-acid chain: Isoleucine--tRNA ligase (940 aa).

A 'HIGH' region motif is present at residues 58 to 68; sequence PYANGSIHIGH. Glutamate 564 serves as a coordination point for L-isoleucyl-5'-AMP. Residues 605–609 carry the 'KMSKS' region motif; it reads KMSKS. Lysine 608 serves as a coordination point for ATP. Residues cysteine 903, cysteine 906, cysteine 923, and cysteine 926 each contribute to the Zn(2+) site.

It belongs to the class-I aminoacyl-tRNA synthetase family. IleS type 1 subfamily. Monomer. It depends on Zn(2+) as a cofactor.

It localises to the cytoplasm. It carries out the reaction tRNA(Ile) + L-isoleucine + ATP = L-isoleucyl-tRNA(Ile) + AMP + diphosphate. In terms of biological role, catalyzes the attachment of isoleucine to tRNA(Ile). As IleRS can inadvertently accommodate and process structurally similar amino acids such as valine, to avoid such errors it has two additional distinct tRNA(Ile)-dependent editing activities. One activity is designated as 'pretransfer' editing and involves the hydrolysis of activated Val-AMP. The other activity is designated 'posttransfer' editing and involves deacylation of mischarged Val-tRNA(Ile). This Shewanella woodyi (strain ATCC 51908 / MS32) protein is Isoleucine--tRNA ligase.